Here is a 515-residue protein sequence, read N- to C-terminus: Anterior pharynx in excess protein 1 (515 aa).

The first 26 residues, 1 to 26 (MTNFSSLLTTIFLCIISSATGSGTIE), serve as a signal peptide directing secretion. Residues 27-392 (LLISSPQTVL…QASDELQLRL (366 aa)) lie on the Extracellular side of the membrane. Residue Asn-123 is glycosylated (N-linked (GlcNAc...) asparagine). A DSL domain is found at 130 to 172 (NLCSSNYHGKRCNRYCIANAKLHWECSTHGVRRCSAGWSGEDC). Intrachain disulfides connect Cys-132–Cys-141, Cys-145–Cys-155, Cys-163–Cys-172, Cys-177–Cys-187, Cys-181–Cys-193, Cys-195–Cys-204, Cys-213–Cys-218, Cys-228–Cys-237, Cys-244–Cys-256, Cys-250–Cys-268, Cys-270–Cys-279, Cys-288–Cys-300, Cys-294–Cys-310, and Cys-312–Cys-321. 4 EGF-like domains span residues 173–205 (SNPI…TRCE), 203–238 (RCEQ…DRCD), 240–280 (DIKI…SQCK), and 284–322 (SKVR…KFCE). Asn-200 carries N-linked (GlcNAc...) asparagine glycosylation. Residues 325–349 (NHGDCSAMRCSAGETCQISGDFAIC) enclose the EGF-like 5; incomplete domain. Residues 393 to 413 (IAAICVLFSVCVIGLALVSFF) form a helical membrane-spanning segment. Residues 414–515 (FYMHSFSKWK…AADDESSFRV (102 aa)) lie on the Cytoplasmic side of the membrane. Disordered regions lie at residues 427–452 (SQQA…SGTG) and 466–494 (RGNA…PPAY). The span at 431–452 (GGSTILPTTTSIPMSTTSSGTG) shows a compositional bias: low complexity.

The protein localises to the cell membrane. It localises to the nucleus. Its subcellular location is the cytoplasm. Functionally, probable ligand for lin-12/Notch and glp-1/Notch receptors and involved in the mediation of Notch signaling. Involved in the lin-12/Notch pathway signaling of cell fate in vulval precursor cells (VPCs), acting redundantly with dsl-1 and lag-2. Contributes to the establishment of the dorsal-ventral axis in early embryos. Involved in the specification of the blastomere cell ABp fate, probably acting as a signal from the P2 blastomere to the glp-1/Notch receptor on ABp and ABa. Probably acts as a signal, from the secondary vulval epithelial cells and the vulval muscle type 1 (vm1) cells, to activate the lin-12/Notch pathway in type 2 vulval muscle (vm2) cells, contributing to formation of the postsynaptic muscle plasma membrane extensions, known as muscle arms. Required for oocyte growth control, acting redundantly with lag-2, perhaps signaling via the glp-1/Notch pathway. Plays a somatic role in ovulation during adulthood, perhaps via lin-12/Notch signaling. Involved in establishing left-right asymmetry during intestinal organogenesis. This chain is Anterior pharynx in excess protein 1 (apx-1), found in Caenorhabditis elegans.